Consider the following 286-residue polypeptide: Translocon-associated protein subunit alpha (286 aa).

The N-terminal stretch at 1–23 is a signal peptide; that stretch reads MRVLPRLLLLLLLAFPAAVLLRG. Residues 24 to 207 are Lumenal-facing; that stretch reads GPGGSLVAAQ…EREDGLDGET (184 aa). The segment covering 37 to 75 has biased composition (acidic residues); that stretch reads EDEETVEDSIIEDEDDEAEVEEDEPTDLAEDKEEEDVSG. The interval 37-83 is disordered; it reads EDEETVEDSIIEDEDDEAEVEEDEPTDLAEDKEEEDVSGEPEASPSA. N-linked (GlcNAc...) asparagine glycans are attached at residues N136 and N191. Residues 208–228 form a helical membrane-spanning segment; that stretch reads IFMYMFLAGLGLLVVVGLHQL. Residues 229–286 are Cytoplasmic-facing; the sequence is LESRKRKRPIQKVEMGTSSQNDVDMSWIPQETLNQINKASPRRLPRKRAQKRSVGSDE. At S247 the chain carries Phosphoserine. T260 carries the post-translational modification Phosphothreonine. The disordered stretch occupies residues 261–286; it reads LNQINKASPRRLPRKRAQKRSVGSDE. Residue S268 is modified to Phosphoserine. Residues 268–279 show a composition bias toward basic residues; that stretch reads SPRRLPRKRAQK.

It belongs to the TRAP-alpha family. Heterotetramer of TRAP-alpha, TRAP-beta, TRAP-delta and TRAP-gamma. Interacts with palmitoylated calnexin (CALX), the interaction is required for efficient folding of glycosylated proteins. Phosphorylated in its cytoplasmic tail.

It localises to the endoplasmic reticulum membrane. Functionally, TRAP proteins are part of a complex whose function is to bind calcium to the ER membrane and thereby regulate the retention of ER resident proteins. May be involved in the recycling of the translocation apparatus after completion of the translocation process or may function as a membrane-bound chaperone facilitating folding of translocated proteins. The polypeptide is Translocon-associated protein subunit alpha (SSR1) (Canis lupus familiaris (Dog)).